A 127-amino-acid chain; its full sequence is Aspartate 1-decarboxylase (127 aa).

The Schiff-base intermediate with substrate; via pyruvic acid role is filled by S25. S25 carries the pyruvic acid (Ser) modification. Substrate is bound at residue T57. Y58 acts as the Proton donor in catalysis. Residue 73–75 participates in substrate binding; the sequence is GAA.

It belongs to the PanD family. As to quaternary structure, heterooctamer of four alpha and four beta subunits. Pyruvate is required as a cofactor. In terms of processing, is synthesized initially as an inactive proenzyme, which is activated by self-cleavage at a specific serine bond to produce a beta-subunit with a hydroxyl group at its C-terminus and an alpha-subunit with a pyruvoyl group at its N-terminus.

The protein localises to the cytoplasm. It catalyses the reaction L-aspartate + H(+) = beta-alanine + CO2. The protein operates within cofactor biosynthesis; (R)-pantothenate biosynthesis; beta-alanine from L-aspartate: step 1/1. In terms of biological role, catalyzes the pyruvoyl-dependent decarboxylation of aspartate to produce beta-alanine. This is Aspartate 1-decarboxylase from Bacillus velezensis (strain DSM 23117 / BGSC 10A6 / LMG 26770 / FZB42) (Bacillus amyloliquefaciens subsp. plantarum).